The following is a 205-amino-acid chain: MLLCDIGNTTYHFFDENSSYKEDAKLFNPSSIKREVFYICVNSSVKERLSLLDNWIDLSLHVDMSRYYKTMGIDRIMACEAIESGVVVDAGSAITVDIIKNGNFEGGFIYAGVKAMNECYKNISAQLEYSFNFELDLDKMPKNSRDAISYGYLGLLYKEVASYGMKIYLTGGDAGQFSKLFLNSDVDELLLFKGMKNIMKKANLC.

Aspartate 5 to histidine 12 lines the ATP pocket. Residues tyrosine 68 and glycine 72–arginine 75 contribute to the substrate site. Catalysis depends on aspartate 74, which acts as the Proton acceptor. Aspartate 89 contributes to the K(+) binding site. An ATP-binding site is contributed by serine 92. Serine 144 serves as a coordination point for substrate.

This sequence belongs to the type III pantothenate kinase family. As to quaternary structure, homodimer. It depends on NH4(+) as a cofactor. Requires K(+) as cofactor.

Its subcellular location is the cytoplasm. The catalysed reaction is (R)-pantothenate + ATP = (R)-4'-phosphopantothenate + ADP + H(+). It participates in cofactor biosynthesis; coenzyme A biosynthesis; CoA from (R)-pantothenate: step 1/5. In terms of biological role, catalyzes the phosphorylation of pantothenate (Pan), the first step in CoA biosynthesis. In Sulfurimonas denitrificans (strain ATCC 33889 / DSM 1251) (Thiomicrospira denitrificans (strain ATCC 33889 / DSM 1251)), this protein is Type III pantothenate kinase.